The chain runs to 1048 residues: Pleckstrin homology domain-containing family A member 6 (1048 aa).

Polar residues predominate over residues 1–22; that stretch reads MSNKTGGKRPATTNSDIPNHNM. The disordered stretch occupies residues 1 to 36; that stretch reads MSNKTGGKRPATTNSDIPNHNMVSEVPPERPSVRAT. Residues 59 to 158 enclose the PH domain; that stretch reads PVTKAGWLFK…WIQAMGEAAR (100 aa). Disordered regions lie at residues 165-318 and 448-467; these read QKSV…MNQL and SLQP…SYSR. A compositionally biased stretch (basic and acidic residues) spans 201–233; the sequence is PEPEAKTRGEGDGRGCEKAERRPERPEVKKEPP. S247 and S251 each carry phosphoserine. Residues 267–290 are compositionally biased toward polar residues; sequence AQPNGWQYHSPSRPGSTAFPSQDG. S314, S459, S461, and S472 each carry phosphoserine. The segment covering 456–465 has biased composition (polar residues); that stretch reads VPRSPSQGSY. Y492 carries the phosphotyrosine modification. S591 bears the Phosphoserine mark. The disordered stretch occupies residues 663–746; it reads RKNNPSRGTD…HQTLPLDTPR (84 aa). A compositionally biased stretch (low complexity) spans 687 to 711; the sequence is SSNSPASPLSSASLTSPLSPFSLVS. Over residues 712-721 the composition is skewed to polar residues; that stretch reads GSQGSPTKPG. The residue at position 744 (T744) is a Phosphothreonine. S777 carries the post-translational modification Phosphoserine. T784 bears the Phosphothreonine mark. The disordered stretch occupies residues 793 to 858; it reads ASGLTNGLSS…PAPDPSPRPA (66 aa). The span at 794-803 shows a compositional bias: polar residues; it reads SGLTNGLSSQ. S801 is subject to Phosphoserine. Positions 815-827 are enriched in basic and acidic residues; that stretch reads GKVKMSVEEQIDR. Residues 828–842 show a composition bias toward basic residues; it reads MRRHQSGSMREKRRS. Phosphoserine occurs at positions 848, 854, and 867. T920 bears the Phosphothreonine mark. Position 940 is a phosphoserine (S940). Disordered regions lie at residues 968–989 and 1005–1048; these read PIGE…QEQE and RGRM…TMRV. Position 1015 is a phosphothreonine (T1015). Residues 1016-1030 are compositionally biased toward pro residues; that stretch reads PSPPTSPASPAPPAN. At S1017 the chain carries Phosphoserine. T1020 is modified (phosphothreonine). 2 positions are modified to phosphoserine: S1021 and S1024.

In terms of tissue distribution, highly expressed in heart, kidney and throughout the brain.

In Homo sapiens (Human), this protein is Pleckstrin homology domain-containing family A member 6 (PLEKHA6).